The primary structure comprises 484 residues: Bifunctional protein GlmU (484 aa).

Positions 1–240 are pyrophosphorylase; that stretch reads MSNPHSSAVI…HRELAGVNDR (240 aa). Residues 12-15, Lys-26, Gln-83, and 88-89 each bind UDP-N-acetyl-alpha-D-glucosamine; these read LAAG and GT. A Mg(2+)-binding site is contributed by Asp-113. UDP-N-acetyl-alpha-D-glucosamine-binding residues include Gly-150, Glu-165, Asn-180, and Asn-238. Asn-238 is a binding site for Mg(2+). Residues 241–261 are linker; sequence VQLAQAGKILNQRLVEDAMRN. An N-acetyltransferase region spans residues 262–484; it reads GATIVDPDTT…QAHAHETKEG (223 aa). The UDP-N-acetyl-alpha-D-glucosamine site is built by Arg-343 and Lys-361. The active-site Proton acceptor is His-373. Residues Tyr-376 and Asn-387 each contribute to the UDP-N-acetyl-alpha-D-glucosamine site. Residues Ala-390, 396 to 397, Ser-415, and Ala-433 contribute to the acetyl-CoA site; that span reads NY. Residues 461–484 form a disordered region; it reads EKNRPGTPAADAARQAHAHETKEG.

In the N-terminal section; belongs to the N-acetylglucosamine-1-phosphate uridyltransferase family. This sequence in the C-terminal section; belongs to the transferase hexapeptide repeat family. In terms of assembly, homotrimer. It depends on Mg(2+) as a cofactor.

The protein localises to the cytoplasm. The catalysed reaction is alpha-D-glucosamine 1-phosphate + acetyl-CoA = N-acetyl-alpha-D-glucosamine 1-phosphate + CoA + H(+). The enzyme catalyses N-acetyl-alpha-D-glucosamine 1-phosphate + UTP + H(+) = UDP-N-acetyl-alpha-D-glucosamine + diphosphate. It participates in nucleotide-sugar biosynthesis; UDP-N-acetyl-alpha-D-glucosamine biosynthesis; N-acetyl-alpha-D-glucosamine 1-phosphate from alpha-D-glucosamine 6-phosphate (route II): step 2/2. The protein operates within nucleotide-sugar biosynthesis; UDP-N-acetyl-alpha-D-glucosamine biosynthesis; UDP-N-acetyl-alpha-D-glucosamine from N-acetyl-alpha-D-glucosamine 1-phosphate: step 1/1. It functions in the pathway bacterial outer membrane biogenesis; LPS lipid A biosynthesis. In terms of biological role, catalyzes the last two sequential reactions in the de novo biosynthetic pathway for UDP-N-acetylglucosamine (UDP-GlcNAc). The C-terminal domain catalyzes the transfer of acetyl group from acetyl coenzyme A to glucosamine-1-phosphate (GlcN-1-P) to produce N-acetylglucosamine-1-phosphate (GlcNAc-1-P), which is converted into UDP-GlcNAc by the transfer of uridine 5-monophosphate (from uridine 5-triphosphate), a reaction catalyzed by the N-terminal domain. The sequence is that of Bifunctional protein GlmU from Corynebacterium diphtheriae (strain ATCC 700971 / NCTC 13129 / Biotype gravis).